Consider the following 115-residue polypeptide: Parathyroid hormone (115 aa).

An N-terminal signal peptide occupies residues 1–25 (MIPAKDMAKVMIVMLAICFLTKSDG). Positions 26 to 31 (KSVKKR) are excised as a propeptide. Residues 51–69 (RVEWLRKKLQDVHNFVALG) are important for receptor binding. The interval 73–115 (APRDAGSQRPRKKEDNVLVESHEKSLGEADKADVNVLTKAKSQ) is disordered. Positions 84 to 105 (KKEDNVLVESHEKSLGEADKAD) are enriched in basic and acidic residues.

This sequence belongs to the parathyroid hormone family. Interacts with PTH1R (via N-terminal extracellular domain).

It is found in the secreted. Functionally, parathyroid hormone elevates calcium level by dissolving the salts in bone and preventing their renal excretion. Acts by binding to its receptor, PTH1R, activating G protein-coupled receptor signaling. Stimulates [1-14C]-2-deoxy-D-glucose (2DG) transport and glycogen synthesis in osteoblastic cells. This Homo sapiens (Human) protein is Parathyroid hormone.